The following is a 608-amino-acid chain: Serine/threonine-protein kinase BUR1 (608 aa).

In terms of domain architecture, Protein kinase spans 39 to 346; that stretch reads YEIIQKLGQG…ALDALNHNYF (308 aa). ATP is bound by residues 45 to 53 and K68; that span reads LGQGTFGVV. D174 (proton acceptor) is an active-site residue. Disordered stretches follow at residues 383–419 and 443–571; these read HEANKIPKAHFPKGPGEYNNSNNYPRNRNGSFPLALP and YIPK…FDED. Residues 400-411 show a composition bias toward low complexity; that stretch reads YNNSNNYPRNRN. Residues 471–482 show a composition bias toward basic and acidic residues; that stretch reads LRDRSPRREGHI. Positions 487-502 are enriched in low complexity; that stretch reads STTNSNNISSNSSASN. Composition is skewed to polar residues over residues 503–512 and 539–548; these read VGGTLSNPTH and PQSSSRNVSD. The span at 559–571 shows a compositional bias: acidic residues; the sequence is EQNESDLTDFDED.

Belongs to the protein kinase superfamily. CMGC Ser/Thr protein kinase family. CDC2/CDKX subfamily.

It is found in the nucleus. It carries out the reaction L-seryl-[protein] + ATP = O-phospho-L-seryl-[protein] + ADP + H(+). It catalyses the reaction L-threonyl-[protein] + ATP = O-phospho-L-threonyl-[protein] + ADP + H(+). The enzyme catalyses [DNA-directed RNA polymerase] + ATP = phospho-[DNA-directed RNA polymerase] + ADP + H(+). In terms of biological role, serine/threonine-protein kinase involved in transcription regulation. Phosphorylates the UBC2/RAD6 ubiquitin-conjugating enzyme (E2), leading to monoubiquitination of histone H2B and the silencing of telomeric-associated genes. Also required for histone H3 methylation. Necessary for the recovery from pheromone-induced growth arrest in the cell cycle G1 phase. This Debaryomyces hansenii (strain ATCC 36239 / CBS 767 / BCRC 21394 / JCM 1990 / NBRC 0083 / IGC 2968) (Yeast) protein is Serine/threonine-protein kinase BUR1 (BUR1).